Reading from the N-terminus, the 417-residue chain is RH-like protein IIF (417 aa).

The next 11 helical transmembrane spans lie at 12–32, 44–64, 77–97, 125–145, 172–192, 203–223, 238–258, 265–285, 287–307, 331–351, and 358–378; these read CLPL…YFFT, LVAS…GFGF, VAFN…LDGF, ISAG…MVLV, FYLF…KPLP, TIPS…WPSF, VFNT…GSSL, ISMT…GTSC, LIPS…ISIG, NFSL…VRHT, and MIGF…AIAL.

This sequence belongs to the ammonium transporter (TC 2.A.49) family. Rh subfamily.

It is found in the membrane. Its function is as follows. May be part of an oligomeric complex which is likely to have a transport or channel function in the erythrocyte membrane. In Pan troglodytes (Chimpanzee), this protein is RH-like protein IIF.